A 106-amino-acid polypeptide reads, in one-letter code: Small ribosomal subunit protein bS16 (106 aa).

Belongs to the bacterial ribosomal protein bS16 family.

The chain is Small ribosomal subunit protein bS16 from Protochlamydia amoebophila (strain UWE25).